Here is a 428-residue protein sequence, read N- to C-terminus: tRNA modification GTPase MnmE (428 aa).

3 residues coordinate (6S)-5-formyl-5,6,7,8-tetrahydrofolate: Arg-20, Glu-77, and Lys-117. The TrmE-type G domain maps to 213–351 (GFEVAIVGSP…LVSRISDTLR (139 aa)). Residues 223-228 (NVGKST), 242-248 (SEYAGTT), and 267-270 (DTAG) each bind GTP. Residues Ser-227 and Thr-248 each coordinate Mg(2+). (6S)-5-formyl-5,6,7,8-tetrahydrofolate is bound at residue Lys-428.

It belongs to the TRAFAC class TrmE-Era-EngA-EngB-Septin-like GTPase superfamily. TrmE GTPase family. Homodimer. Heterotetramer of two MnmE and two MnmG subunits. K(+) is required as a cofactor.

It localises to the cytoplasm. Exhibits a very high intrinsic GTPase hydrolysis rate. Involved in the addition of a carboxymethylaminomethyl (cmnm) group at the wobble position (U34) of certain tRNAs, forming tRNA-cmnm(5)s(2)U34. This Ruegeria sp. (strain TM1040) (Silicibacter sp.) protein is tRNA modification GTPase MnmE.